The primary structure comprises 399 residues: MHFIIGIVICLSLSVIQSNTSDEGMCMAKEQCTDPEESTTGRSLYSADYNKYFNAIETALAGYVACNSTNCNCHADVLKADLKPFKAHGITKEMINRAKQYGTHYQVIGHKLYRQRECMFPARCSGVEHFVRPLLPLLPDMDLIVNCRDWPQIHRHWSKEKIPVLSFSKTAEYLDIMYPAWAFWEGGPAIALYPTGLGRWDLHRQTITKASADWEAKEPKAFFRGSRTSDERDALVLLSRAQPSLVDAQYTKNQAWKSPQDTLNAEPAREVTLEEHCRYRFLFNFRGVAASFRFKHLFLCRSLVFHVGDEWQEFFYPSLKPWVHYVPVPVRSTPEELEALITFFQEHDQLARAIAERGYEHIWNHLRMADVECYWKKLLKRYGKLIRYTVERDSTLIEV.

Positions Met-1 to Ser-18 are cleaved as a signal peptide. Asn-19 and Asn-67 each carry an N-linked (GlcNAc...) asparagine glycan. 4 disulfides stabilise this stretch: Cys-66–Cys-73, Cys-71–Cys-373, Cys-118–Cys-124, and Cys-277–Cys-300. The active-site Proton donor/acceptor is the Asp-149. The tract at residues Ala-189–Pro-194 is interaction with the consensus sequence C-X-S-X-[PA]-C in peptide substrates. UDP-alpha-D-glucose contacts are provided by residues Arg-224–Thr-228, Arg-232, Val-271–Leu-273, and Ala-289–Arg-293.

Belongs to the glycosyltransferase 90 family.

Its subcellular location is the endoplasmic reticulum lumen. It localises to the secreted. It functions in the pathway protein modification; protein glycosylation. Protein O-glucosyltransferase. Catalyzes the reaction that attaches glucose through an O-glycosidic linkage to a conserved serine residue found in the consensus sequence C-X-S-X-[PA]-C in epidermal growth factor-like repeats. Regulates Notch signaling by glucosylating Notch in the ER, glucosylation is required for the correct folding and cleavage of Notch. The chain is O-glucosyltransferase rumi homolog from Anopheles gambiae (African malaria mosquito).